A 369-amino-acid polypeptide reads, in one-letter code: MGEITNVMEYQAIAKQKLPKMAYDYYASGAEDEWTLQENREAFSRILFRPRILIDVSKIDMTTTVLGFKISMPIMVAPTAMQKMAHPDGEYATARAAAAAGTIMTLSSWATSSVEEVASTGPGIRFFQLYVYKDRKVVEQLVRRAERAGFKAIALTVDTPRLGRREADIKNRFVLPPHLTLKNFEGLDLGKMDQAADSGLASYVAGQVDRTLSWKDVKWLQTITTLPILVKGVLTAEDTRLAVANGAAGIIVSNHGARQLDYVPATISALEEVVKAARGQLPVFVDGGVRRGTDVFKALALGAAGVFVGRPVVFSLAAAGEAGVSNVLRMLRDEFELTMALSGCTSLAEITRKHIITESDKLSAIPSRL.

The FMN hydroxy acid dehydrogenase domain occupies 1 to 360; it reads MGEITNVMEY…TRKHIITESD (360 aa). Tyrosine 25 lines the glyoxylate pocket. FMN-binding positions include 78–80, serine 107, 128–130, and threonine 156; these read PTA and QLY. Tyrosine 130 is a binding site for glyoxylate. Residue arginine 165 coordinates glyoxylate. Lysine 231 and serine 253 together coordinate FMN. Positions 255 and 258 each coordinate glyoxylate. Catalysis depends on histidine 255, which acts as the Proton acceptor. Residues 286-290 and 309-310 contribute to the FMN site; these read DGGVR and GR.

The protein belongs to the FMN-dependent alpha-hydroxy acid dehydrogenase family. As to quaternary structure, homotetramer. The cofactor is FMN.

The protein localises to the peroxisome. It carries out the reaction glycolate + O2 = glyoxylate + H2O2. The protein operates within photosynthesis; photorespiration; glycine from 2-phosphoglycolate: step 2/3. Functionally, catalyzes the oxidation of glycolate to glyoxylate, with a reduction of O2 to H2O2. Is an essential enzyme in photorespiration in plants. Photorespiration plays a vital role in C4 photosynthesis in Z.mays and is essential for maize seedling development and maintaining low (non-toxic) levels of glycolate. The polypeptide is Glycolate oxidase 1 (Zea mays (Maize)).